The following is a 548-amino-acid chain: MNYAIDKFTGTLILAARATKYAQYVCPVCKKGVNLRKGKVIPPYFAHLPGHGTSDCENFVPGNSIIIETIKTISKRYMDLRLLIPVGSNSREWSLELVLPTCNLCRAKITLDVGGRSQTLDMRSMVKSRQIGAELSVKSYRIVSYSGEPDPKFVTEVERECPGLPSEGAAVFTALGRGASKGFPRAQELRCTETFAFLWRHPVAPDFPDELEIKSLASKQGWNLALVTIPEVPSVESISWLKSFTYLPVVPARTSITAIWPFLNQKTSINHVECVHSDTILLSANMAPTSSENVGPTMYAQGSSLLLSAVGVEKSPAFFILNPGENDFVGVSGSIEQDVNLFFSFYKKNVSVPRKYPSIDLVFTKRNKEKTIVSLHQRRCIEVMMEARMFGHKLEYMSMPSGVEGVARIQRQTESSVIKLVSNDDIAAHDKSMRLLSPVALSQLSDCLANLTCHVEIDFLGLGKIFLPSSSMLSLDDGEFIELSPNLRSRILSFILQMGHTLHGFSLNNDFLLVEKLVDLQPEPHLLPHYRALVKEVKTNGFECNRFR.

The protein localises to the cytoplasm. Component of antiviral defense system Druantia type I, composed of DruA, DruB, DruC, DruD and DruE. Expression of Druantia in E.coli (strain MG1655) confers resistance to phage lambda, SECphi18, SECphi27 and T4. This is Druantia protein DruB from Escherichia coli (strain UMEA 4076-1).